The chain runs to 407 residues: 1-deoxy-D-xylulose 5-phosphate reductoisomerase (407 aa).

6 residues coordinate NADPH: T25, G26, S27, I28, N53, and N136. K137 is a binding site for 1-deoxy-D-xylulose 5-phosphate. Residue E138 coordinates NADPH. D162 serves as a coordination point for Mn(2+). The 1-deoxy-D-xylulose 5-phosphate site is built by S163, E164, S188, and H211. A Mn(2+)-binding site is contributed by E164. G217 is an NADPH binding site. 4 residues coordinate 1-deoxy-D-xylulose 5-phosphate: S224, N229, K230, and E233. A Mn(2+)-binding site is contributed by E233.

This sequence belongs to the DXR family. Mg(2+) is required as a cofactor. Mn(2+) serves as cofactor.

The enzyme catalyses 2-C-methyl-D-erythritol 4-phosphate + NADP(+) = 1-deoxy-D-xylulose 5-phosphate + NADPH + H(+). Its pathway is isoprenoid biosynthesis; isopentenyl diphosphate biosynthesis via DXP pathway; isopentenyl diphosphate from 1-deoxy-D-xylulose 5-phosphate: step 1/6. Its function is as follows. Catalyzes the NADPH-dependent rearrangement and reduction of 1-deoxy-D-xylulose-5-phosphate (DXP) to 2-C-methyl-D-erythritol 4-phosphate (MEP). This Rhodopseudomonas palustris (strain HaA2) protein is 1-deoxy-D-xylulose 5-phosphate reductoisomerase.